The primary structure comprises 1183 residues: Chromosome partition protein Smc (1183 aa).

Residue proline 32 to asparagine 39 participates in ATP binding. Coiled-coil stretches lie at residues isoleucine 167 to asparagine 322 and alanine 358 to asparagine 497. Positions lysine 409–glutamate 442 are disordered. Over residues leucine 419–glutamate 442 the composition is skewed to basic and acidic residues. Positions leucine 523–leucine 632 constitute an SMC hinge domain. Coiled coils occupy residues glycine 669–arginine 941 and asparagine 980–lysine 1025.

It belongs to the SMC family. Homodimer.

The protein localises to the cytoplasm. Required for chromosome condensation and partitioning. This Chlorobaculum tepidum (strain ATCC 49652 / DSM 12025 / NBRC 103806 / TLS) (Chlorobium tepidum) protein is Chromosome partition protein Smc.